Reading from the N-terminus, the 376-residue chain is Succinyl-diaminopimelate desuccinylase (376 aa).

Residue histidine 67 participates in Zn(2+) binding. Residue aspartate 69 is part of the active site. Position 100 (aspartate 100) interacts with Zn(2+). Glutamate 134 (proton acceptor) is an active-site residue. Zn(2+)-binding residues include glutamate 135, glutamate 163, and histidine 349.

This sequence belongs to the peptidase M20A family. DapE subfamily. Homodimer. The cofactor is Zn(2+). It depends on Co(2+) as a cofactor.

It catalyses the reaction N-succinyl-(2S,6S)-2,6-diaminopimelate + H2O = (2S,6S)-2,6-diaminopimelate + succinate. It functions in the pathway amino-acid biosynthesis; L-lysine biosynthesis via DAP pathway; LL-2,6-diaminopimelate from (S)-tetrahydrodipicolinate (succinylase route): step 3/3. Its function is as follows. Catalyzes the hydrolysis of N-succinyl-L,L-diaminopimelic acid (SDAP), forming succinate and LL-2,6-diaminopimelate (DAP), an intermediate involved in the bacterial biosynthesis of lysine and meso-diaminopimelic acid, an essential component of bacterial cell walls. This chain is Succinyl-diaminopimelate desuccinylase, found in Shewanella woodyi (strain ATCC 51908 / MS32).